A 162-amino-acid chain; its full sequence is Glycine cleavage system H protein, mitochondrial (162 aa).

A mitochondrion-targeting transit peptide spans 1-31; the sequence is MALRIWASSTANALRLSSATRPHFSPLSRCF. Positions 53–135 constitute a Lipoyl-binding domain; sequence VATIGITDHA…YEDGWMIKVK (83 aa). N6-lipoyllysine is present on Lys-94.

It belongs to the GcvH family. The glycine cleavage system is composed of four proteins: P, T, L and H. It depends on (R)-lipoate as a cofactor.

It localises to the mitochondrion. The glycine cleavage system catalyzes the degradation of glycine. The H protein shuttles the methylamine group of glycine from the P protein to the T protein. The protein is Glycine cleavage system H protein, mitochondrial (GDCSH) of Flaveria pringlei.